The chain runs to 185 residues: Ribosome-recycling factor (185 aa).

It belongs to the RRF family.

Its subcellular location is the cytoplasm. Responsible for the release of ribosomes from messenger RNA at the termination of protein biosynthesis. May increase the efficiency of translation by recycling ribosomes from one round of translation to another. In Corynebacterium glutamicum (strain R), this protein is Ribosome-recycling factor.